The sequence spans 360 residues: Aminomethyltransferase (360 aa).

The protein belongs to the GcvT family. The glycine cleavage system is composed of four proteins: P, T, L and H.

It carries out the reaction N(6)-[(R)-S(8)-aminomethyldihydrolipoyl]-L-lysyl-[protein] + (6S)-5,6,7,8-tetrahydrofolate = N(6)-[(R)-dihydrolipoyl]-L-lysyl-[protein] + (6R)-5,10-methylene-5,6,7,8-tetrahydrofolate + NH4(+). In terms of biological role, the glycine cleavage system catalyzes the degradation of glycine. The sequence is that of Aminomethyltransferase from Legionella pneumophila (strain Lens).